Here is a 305-residue protein sequence, read N- to C-terminus: Mitochondrial uncoupling protein 3 (305 aa).

Solcar repeat units follow at residues 14–100 (TRIL…LKGL), 112–204 (LPLA…AKHF), and 213–299 (DNIF…FRLL). 6 helical membrane passes run 16–36 (ILLASLSAMVAESVTFPIDLT), 69–89 (VIGLYKGLSPAIIRHLFYTPI), 118–138 (ALVGGFSGVIAQVVASPADLV), 178–198 (KGVLPNIQRAFLVNMGELACY), 219–239 (TLASIMSGLASTSLSCPADVV), and 272–292 (WKGFFPTWARLGPWQFVFWVS).

It belongs to the mitochondrial carrier (TC 2.A.29) family.

The protein localises to the mitochondrion inner membrane. PUMPS are mitochondrial transporter proteins that create proton leaks across the inner mitochondrial membrane, thus uncoupling oxidative phosphorylation. This leads to a decrease in the efficiency of oxidative phosphorylation and an increase in heat production. May be involved in protecting plant cells against oxidative stress damage. In Arabidopsis thaliana (Mouse-ear cress), this protein is Mitochondrial uncoupling protein 3 (PUMP3).